Reading from the N-terminus, the 319-residue chain is 1-aminocyclopropane-1-carboxylate oxidase 1 (319 aa).

The Fe2OG dioxygenase domain occupies 153-253 (PNFGTKVSNY…RMSLASFYNP (101 aa)). H177, D179, and H234 together coordinate Fe cation.

The protein belongs to the iron/ascorbate-dependent oxidoreductase family. The cofactor is Fe cation.

It carries out the reaction 1-aminocyclopropane-1-carboxylate + L-ascorbate + O2 = ethene + L-dehydroascorbate + hydrogen cyanide + CO2 + 2 H2O. It functions in the pathway alkene biosynthesis; ethylene biosynthesis via S-adenosyl-L-methionine; ethylene from S-adenosyl-L-methionine: step 2/2. The polypeptide is 1-aminocyclopropane-1-carboxylate oxidase 1 (ACO1) (Petunia hybrida (Petunia)).